The sequence spans 1775 residues: ATP-dependent RNA helicase DEAH12, chloroplastic (1775 aa).

A chloroplast-targeting transit peptide spans M1–R33. Positions M1–V77 are disordered. Over residues S21 to S34 the composition is skewed to low complexity. Residues A35–P60 are compositionally biased toward polar residues. The 165-residue stretch at L316 to N480 folds into the Helicase ATP-binding domain. G329 to S336 contributes to the ATP binding site. The DEAH box signature appears at D427 to H430. Residues D510 to G676 form the Helicase C-terminal domain. Residues I1560 to I1767 are TRIAD supradomain. Zn(2+) is bound by residues C1564, C1567, C1580, H1582, C1585, C1588, C1607, C1612, C1652, C1657, C1675, C1678, C1683, C1686, H1691, C1696, C1722, and C1725. The RING-type 1 zinc finger occupies C1564 to C1612. An IBR-type zinc finger spans residues D1631–C1696. An RING-type 2; atypical zinc finger spans residues C1722–C1750. C1735 is an active-site residue. The Zn(2+) site is built by C1740 and C1742.

This sequence belongs to the DEAD box helicase family. DEAH subfamily.

Its subcellular location is the plastid. It is found in the chloroplast. The enzyme catalyses ATP + H2O = ADP + phosphate + H(+). This Arabidopsis thaliana (Mouse-ear cress) protein is ATP-dependent RNA helicase DEAH12, chloroplastic.